Consider the following 80-residue polypeptide: CDC42 small effector protein 1 (80 aa).

2 S-palmitoyl cysteine lipidation sites follow: Cys-10 and Cys-11. Positions 30–43 (IGEPMNFVHLTHIG) constitute a CRIB domain. Residues 48-80 (GAGDGLAMTGAVQEQMRSKGNHRDRPWSNSRAL) form a disordered region.

This sequence belongs to the CDC42SE/SPEC family. As to quaternary structure, interacts with CDC42 (in GTP-bound form). Interacts weakly with RAC1 and not at all with RHOA.

The protein resides in the cytoplasm. Its subcellular location is the cytoskeleton. The protein localises to the cell membrane. Probably involved in the organization of the actin cytoskeleton by acting downstream of CDC42, inducing actin filament assembly. Alters CDC42-induced cell shape changes. In activated T-cells, may play a role in CDC42-mediated F-actin accumulation at the immunological synapse. May play a role in early contractile events in phagocytosis in macrophages. This Mus musculus (Mouse) protein is CDC42 small effector protein 1 (Cdc42se1).